A 93-amino-acid polypeptide reads, in one-letter code: Sec-independent protein translocase protein TatA (93 aa).

The helical transmembrane segment at 1-21 (MGSLSPWHWAILAVVVILLFG) threads the bilayer. Residues 45-93 (EMQSENKTETSALGAQSESSAANPTPVQSQRVDPPAPSEQGHSEARPAS) are disordered. The span at 53–75 (ETSALGAQSESSAANPTPVQSQR) shows a compositional bias: polar residues.

This sequence belongs to the TatA/E family. In terms of assembly, the Tat system comprises two distinct complexes: a TatABC complex, containing multiple copies of TatA, TatB and TatC subunits, and a separate TatA complex, containing only TatA subunits. Substrates initially bind to the TatABC complex, which probably triggers association of the separate TatA complex to form the active translocon.

The protein resides in the cell membrane. Its function is as follows. Part of the twin-arginine translocation (Tat) system that transports large folded proteins containing a characteristic twin-arginine motif in their signal peptide across membranes. TatA could form the protein-conducting channel of the Tat system. The polypeptide is Sec-independent protein translocase protein TatA (Mycolicibacterium paratuberculosis (strain ATCC BAA-968 / K-10) (Mycobacterium paratuberculosis)).